The following is a 357-amino-acid chain: DNA integrity scanning protein DisA (357 aa).

The DAC domain occupies 3–141 (RPTLRETVAR…GGERHVVADS (139 aa)). ATP-binding positions include glycine 70, leucine 88, and 101–105 (TRHRS).

Belongs to the DisA family. As to quaternary structure, homooctamer. The cofactor is Mg(2+).

The catalysed reaction is 2 ATP = 3',3'-c-di-AMP + 2 diphosphate. Its function is as follows. Participates in a DNA-damage check-point. DisA forms globular foci that rapidly scan along the chromosomes searching for lesions. Also has diadenylate cyclase activity, catalyzing the condensation of 2 ATP molecules into cyclic di-AMP (c-di-AMP). c-di-AMP likely acts as a signaling molecule that may couple DNA integrity with a cellular process. The protein is DNA integrity scanning protein DisA of Mycolicibacterium paratuberculosis (strain ATCC BAA-968 / K-10) (Mycobacterium paratuberculosis).